A 211-amino-acid polypeptide reads, in one-letter code: Uridine kinase (211 aa).

12–19 (GGSGGGKT) lines the ATP pocket.

The protein belongs to the uridine kinase family.

It localises to the cytoplasm. It carries out the reaction uridine + ATP = UMP + ADP + H(+). The catalysed reaction is cytidine + ATP = CMP + ADP + H(+). It functions in the pathway pyrimidine metabolism; CTP biosynthesis via salvage pathway; CTP from cytidine: step 1/3. It participates in pyrimidine metabolism; UMP biosynthesis via salvage pathway; UMP from uridine: step 1/1. The protein is Uridine kinase of Streptococcus thermophilus (strain CNRZ 1066).